The sequence spans 83 residues: Sulfur carrier protein TusA (83 aa).

Catalysis depends on Cys19, which acts as the Cysteine persulfide intermediate.

Belongs to the sulfur carrier protein TusA family.

It localises to the cytoplasm. Functionally, sulfur carrier protein which probably makes part of a sulfur-relay system. In Vibrio atlanticus (strain LGP32) (Vibrio splendidus (strain Mel32)), this protein is Sulfur carrier protein TusA.